A 110-amino-acid polypeptide reads, in one-letter code: NADH-quinone oxidoreductase subunit K (110 aa).

Helical transmembrane passes span 13–33, 41–61, and 73–93; these read LNHY…GLFM, ILMS…AFSI, and IIIL…LLIY.

This sequence belongs to the complex I subunit 4L family. NDH-1 is composed of 14 different subunits. Subunits NuoA, H, J, K, L, M, N constitute the membrane sector of the complex.

It localises to the cell inner membrane. It catalyses the reaction a quinone + NADH + 5 H(+)(in) = a quinol + NAD(+) + 4 H(+)(out). Functionally, NDH-1 shuttles electrons from NADH, via FMN and iron-sulfur (Fe-S) centers, to quinones in the respiratory chain. The immediate electron acceptor for the enzyme in this species is believed to be ubiquinone. Couples the redox reaction to proton translocation (for every two electrons transferred, four hydrogen ions are translocated across the cytoplasmic membrane), and thus conserves the redox energy in a proton gradient. The sequence is that of NADH-quinone oxidoreductase subunit K from Rickettsia felis (strain ATCC VR-1525 / URRWXCal2) (Rickettsia azadi).